We begin with the raw amino-acid sequence, 649 residues long: DNA mismatch repair protein MutL (649 aa).

Belongs to the DNA mismatch repair MutL/HexB family.

In terms of biological role, this protein is involved in the repair of mismatches in DNA. It is required for dam-dependent methyl-directed DNA mismatch repair. May act as a 'molecular matchmaker', a protein that promotes the formation of a stable complex between two or more DNA-binding proteins in an ATP-dependent manner without itself being part of a final effector complex. The polypeptide is DNA mismatch repair protein MutL (Streptococcus pneumoniae serotype 2 (strain D39 / NCTC 7466)).